Consider the following 709-residue polypeptide: ATP-binding cassette sub-family F member 3 (709 aa).

At Ala2 the chain carries N-acetylalanine. Ser83 bears the Phosphoserine mark. A compositionally biased stretch (basic and acidic residues) spans 129-143; that stretch reads RLKAKQEKRSEKDTL. Positions 129–171 are disordered; it reads RLKAKQEKRSEKDTLKTSNPLVLEEASASQAGSRKESRLESSG. Residues Ser155, Ser157, and Ser161 each carry the phosphoserine modification. A compositionally biased stretch (basic and acidic residues) spans 161–171; it reads SRKESRLESSG. ABC transporter domains follow at residues 178 to 424 and 492 to 707; these read VRIE…LNQQ and LQLD…RREG. 210–217 is a binding site for ATP; it reads GRNGLGKT. Residue Ser283 is modified to Phosphoserine. 525 to 532 provides a ligand contact to ATP; that stretch reads GENGAGKS.

This sequence belongs to the ABC transporter superfamily. ABCF family. EF3 subfamily.

Functionally, displays an antiviral effect against flaviviruses in the presence of OAS1B. This Pongo abelii (Sumatran orangutan) protein is ATP-binding cassette sub-family F member 3 (ABCF3).